Reading from the N-terminus, the 583-residue chain is MSYGEIEGKFLGPREEVTSEPRCKKLKSTTESYVFHNHSNADFHRIQEKTGNDWVPVTIIDVRGHSYLQENKIKTTDLHRPLHDEMPGNRPDVIESIDSQVLQEARPPLVSADDEIYSTSKAFIGPIYKPPEKKKRNEGRNEAHVLNGINDRGGQKEKQKFNSEKSEIDNELFQFYKEIEELEKEKDGFENSCKESEPSQEQFVPFYEGHNNGLLKPDEEKKDLSNKAMPSHCDYQQNLGNEPDKYPCNGQVIPTFCDTSFTSFRPEWQSVYPFIVPYGPPLPSLNYHLNIQRFSGPPNPPSNIFQAQDDSQIQNGYYVNNCHVNWNCMTFDQNNEYTDCSENRSSVHPSGNGCSMQDRYVSNGFCEVRERCWKDHCMDKHNGTDRFVNQQFQEEKLNKLQKLLILLRGLPGSGKTTLSRILLGQNRDGIVFSTDDYFHHQDGYRYNVNQLGDAHDWNQNRAKQAIDQGRSPVIIDNTNIQAWEMKPYVEVAIGKGYRVEFHEPETWWKFDPEELEKRNKHGVSRKKIAQMLDRYEYQMSISIVMNSVEPSHKSTQRPPPPQGRQRWGGSLGSHNRVCVTNNH.

A coiled-coil region spans residues 162–197 (NSEKSEIDNELFQFYKEIEELEKEKDGFENSCKESE). Positions 549–575 (EPSHKSTQRPPPPQGRQRWGGSLGSHN) are disordered.

The protein is NEDD4-binding protein 2-like 2 (N4BP2L2) of Homo sapiens (Human).